We begin with the raw amino-acid sequence, 293 residues long: Ribosomal RNA small subunit methyltransferase H (293 aa).

Residues 32–34 (GGH), Asp-51, Phe-78, Asp-99, and Gln-106 each bind S-adenosyl-L-methionine. Positions 271–293 (PGTEEIRENPPSRSAKLRVAKRI) are disordered.

Belongs to the methyltransferase superfamily. RsmH family.

It is found in the cytoplasm. It catalyses the reaction cytidine(1402) in 16S rRNA + S-adenosyl-L-methionine = N(4)-methylcytidine(1402) in 16S rRNA + S-adenosyl-L-homocysteine + H(+). Its function is as follows. Specifically methylates the N4 position of cytidine in position 1402 (C1402) of 16S rRNA. The polypeptide is Ribosomal RNA small subunit methyltransferase H (Persephonella marina (strain DSM 14350 / EX-H1)).